The sequence spans 471 residues: T-box transcription factor T (471 aa).

The segment at residues 24-196 (LWTKFCSLTN…HNPFAKAFLD (173 aa)) is a DNA-binding region (T-box).

In terms of tissue distribution, developing notochord.

Its subcellular location is the nucleus. In terms of biological role, involved in the transcriptional regulation of genes required for mesoderm differentiation. This Halocynthia roretzi (Sea squirt) protein is T-box transcription factor T.